The chain runs to 115 residues: MESSVKYAQEFVQRYYSSLDTNRNGIAEFYRENSLILWNGKPMQVTEFTSMIVNLPYSKTKVEDFDSQQVMGNDMNIIIVVSGTIRFDGKKPHVFSYVSFYCIYLLVLRSSTNFL.

The 109-residue stretch at 7-115 folds into the NTF2 domain; the sequence is YAQEFVQRYY…LVLRSSTNFL (109 aa).

Its subcellular location is the nucleus. Its function is as follows. Stimulator of protein export for NES-containing proteins. Also plays a role in mRNA nuclear export. The protein is NTF2-related export protein 1 (nxt1) of Schizosaccharomyces pombe (strain 972 / ATCC 24843) (Fission yeast).